Consider the following 555-residue polypeptide: Potassium-transporting ATPase potassium-binding subunit (555 aa).

Helical transmembrane passes span 2–22 (IWVA…PTGI), 60–80 (QYAL…YFIF), 130–150 (IGIT…VMAF), 173–193 (VFLP…VPQT), 246–266 (MSNI…PFTY), 278–298 (ILFV…TTSE), 374–394 (AGFV…GLMV), 412–432 (LIAV…ALAL), 483–503 (LVMF…AASL), and 525–545 (GIFI…MLVL).

The protein belongs to the KdpA family. As to quaternary structure, the system is composed of three essential subunits: KdpA, KdpB and KdpC.

It is found in the cell membrane. Its function is as follows. Part of the high-affinity ATP-driven potassium transport (or Kdp) system, which catalyzes the hydrolysis of ATP coupled with the electrogenic transport of potassium into the cytoplasm. This subunit binds the extracellular potassium ions and delivers the ions to the membrane domain of KdpB through an intramembrane tunnel. The chain is Potassium-transporting ATPase potassium-binding subunit from Bacillus cereus (strain Q1).